The primary structure comprises 211 residues: Xanthine phosphoribosyltransferase (211 aa).

Xanthine is bound by residues L31 and N38. 5-phospho-alpha-D-ribose 1-diphosphate is bound at residue 138–142 (ANGRT). Residue K166 coordinates xanthine.

The protein belongs to the purine/pyrimidine phosphoribosyltransferase family. Xpt subfamily. Homodimer.

Its subcellular location is the cytoplasm. It catalyses the reaction XMP + diphosphate = xanthine + 5-phospho-alpha-D-ribose 1-diphosphate. It participates in purine metabolism; XMP biosynthesis via salvage pathway; XMP from xanthine: step 1/1. Its function is as follows. Converts the preformed base xanthine, a product of nucleic acid breakdown, to xanthosine 5'-monophosphate (XMP), so it can be reused for RNA or DNA synthesis. The polypeptide is Xanthine phosphoribosyltransferase (Chloroflexus aurantiacus (strain ATCC 29364 / DSM 637 / Y-400-fl)).